We begin with the raw amino-acid sequence, 158 residues long: Small ribosomal subunit protein uS9 (158 aa).

It belongs to the universal ribosomal protein uS9 family.

This Brucella anthropi (strain ATCC 49188 / DSM 6882 / CCUG 24695 / JCM 21032 / LMG 3331 / NBRC 15819 / NCTC 12168 / Alc 37) (Ochrobactrum anthropi) protein is Small ribosomal subunit protein uS9.